We begin with the raw amino-acid sequence, 146 residues long: Lipoprotein signal peptidase (146 aa).

3 helical membrane passes run Ile-6 to Leu-26, Met-50 to Leu-70, and Tyr-82 to Ala-104. Residues Asp-108 and Asp-125 contribute to the active site. Residues Phe-123–Pro-143 form a helical membrane-spanning segment.

The protein belongs to the peptidase A8 family.

The protein resides in the cell inner membrane. The catalysed reaction is Release of signal peptides from bacterial membrane prolipoproteins. Hydrolyzes -Xaa-Yaa-Zaa-|-(S,diacylglyceryl)Cys-, in which Xaa is hydrophobic (preferably Leu), and Yaa (Ala or Ser) and Zaa (Gly or Ala) have small, neutral side chains.. Its pathway is protein modification; lipoprotein biosynthesis (signal peptide cleavage). Functionally, this protein specifically catalyzes the removal of signal peptides from prolipoproteins. The sequence is that of Lipoprotein signal peptidase from Sulfurovum sp. (strain NBC37-1).